The primary structure comprises 235 residues: Probable RNA 2'-phosphotransferase (235 aa).

This sequence belongs to the KptA/TPT1 family.

In terms of biological role, removes the 2'-phosphate from RNA via an intermediate in which the phosphate is ADP-ribosylated by NAD followed by a presumed transesterification to release the RNA and generate ADP-ribose 1''-2''-cyclic phosphate (APPR&gt;P). May function as an ADP-ribosylase. This chain is Probable RNA 2'-phosphotransferase, found in Thermoplasma volcanium (strain ATCC 51530 / DSM 4299 / JCM 9571 / NBRC 15438 / GSS1).